Consider the following 318-residue polypeptide: Methionyl-tRNA formyltransferase (318 aa).

S112–P115 contacts (6S)-5,6,7,8-tetrahydrofolate.

It belongs to the Fmt family.

It catalyses the reaction L-methionyl-tRNA(fMet) + (6R)-10-formyltetrahydrofolate = N-formyl-L-methionyl-tRNA(fMet) + (6S)-5,6,7,8-tetrahydrofolate + H(+). Functionally, attaches a formyl group to the free amino group of methionyl-tRNA(fMet). The formyl group appears to play a dual role in the initiator identity of N-formylmethionyl-tRNA by promoting its recognition by IF2 and preventing the misappropriation of this tRNA by the elongation apparatus. The sequence is that of Methionyl-tRNA formyltransferase from Shewanella sp. (strain W3-18-1).